A 483-amino-acid chain; its full sequence is MAAAEDQNPASLQPLRHSPRLRPRNGYGVYVYPNSFFRYEGEWKGGKKHGHGKLLFKDGSYYEGEFVNGEITGEGYQHWAWSGNTYSGQFVLGEPQGHGIMKYKAGGHYEGELSQGLREGQGFLEDQDGQVYQGSFHDNKRHGRGQMVFKNGDKYEGDWVRDQRQGHGVLFCADGSTYKGQWHNDVFSGLGSLVHCSGVTYCGMFINGHPAAQAKKIVVLGPELLEVVQGSPFTLSVQLQQDDGEVAKSESGRVLKISAGVRYVQLPEYSEVSFFKMDDAHMETPIQTPFGFQCIPYPLSVSTSWGLEPGSTVESARADLLLSKKDSEPVLDSEAFHGKGDTLSILPARRHEPCCSAAYQRVDQGCAEFVDIHLGAPPPGMQPYLFLPSMLEKAGNRPKGDRSPPEVLSTAQEPLRGTNRSDGTTAEPSTAAYLGEYVLMVCDVTSPPFLGHRLPTTFKHLRILARGDIHLPHVPEDHPEALS.

Phosphoserine is present on Ser-18. MORN repeat units lie at residues 39–61 (YEGE…DGSY), 62–84 (YEGE…WSGN), 86–108 (YSGQ…AGGH), 109–131 (YEGE…DGQV), 132–154 (YQGS…NGDK), 155–177 (YEGD…DGST), and 178–200 (YKGQ…SGVT). A disordered region spans residues 392–427 (EKAGNRPKGDRSPPEVLSTAQEPLRGTNRSDGTTAE). A compositionally biased stretch (basic and acidic residues) spans 394–404 (AGNRPKGDRSP). Ser-403 carries the phosphoserine modification. Positions 418–427 (TNRSDGTTAE) are enriched in polar residues.

This is MORN repeat-containing protein 1 (Morn1) from Rattus norvegicus (Rat).